The following is a 510-amino-acid chain: NAD(P)H-quinone oxidoreductase subunit 2 B, chloroplastic (510 aa).

A run of 13 helical transmembrane segments spans residues L24–L44, I57–F77, I99–I119, M124–C144, I150–T170, Y183–G203, P227–A247, W295–I315, M323–D343, G347–A367, A395–F415, L418–L438, and M484–I504.

The protein belongs to the complex I subunit 2 family. In terms of assembly, NDH is composed of at least 16 different subunits, 5 of which are encoded in the nucleus.

Its subcellular location is the plastid. The protein localises to the chloroplast thylakoid membrane. It carries out the reaction a plastoquinone + NADH + (n+1) H(+)(in) = a plastoquinol + NAD(+) + n H(+)(out). The catalysed reaction is a plastoquinone + NADPH + (n+1) H(+)(in) = a plastoquinol + NADP(+) + n H(+)(out). Its function is as follows. NDH shuttles electrons from NAD(P)H:plastoquinone, via FMN and iron-sulfur (Fe-S) centers, to quinones in the photosynthetic chain and possibly in a chloroplast respiratory chain. The immediate electron acceptor for the enzyme in this species is believed to be plastoquinone. Couples the redox reaction to proton translocation, and thus conserves the redox energy in a proton gradient. This Liriodendron tulipifera (Tuliptree) protein is NAD(P)H-quinone oxidoreductase subunit 2 B, chloroplastic.